The following is a 740-amino-acid chain: Ribosomal protein S6 kinase alpha-6 (740 aa).

The Protein kinase 1 domain occupies 67-326 (FELLKVLGQG…VEEIKRHTFF (260 aa)). Residues 73 to 81 (LGQGSFGKV) and lysine 99 each bind ATP. Aspartate 192 serves as the catalytic Proton acceptor. Residues 327–396 (STIDWNKLYR…VAPVSLEESK (70 aa)) enclose the AGC-kinase C-terminal domain. The region spanning 420–677 (YELKEDIGVG…AEQVLKHSWI (258 aa)) is the Protein kinase 2 domain. ATP contacts are provided by residues 426–434 (IGVGSYSIC) and lysine 449. The active-site Proton acceptor is aspartate 537.

It belongs to the protein kinase superfamily. AGC Ser/Thr protein kinase family. S6 kinase subfamily. As to quaternary structure, forms a complex with either ERK1 or ERK2 in quiescent cells. Transiently dissociates following mitogenic stimulation. Requires Mg(2+) as cofactor.

The enzyme catalyses L-seryl-[protein] + ATP = O-phospho-L-seryl-[protein] + ADP + H(+). It carries out the reaction L-threonyl-[protein] + ATP = O-phospho-L-threonyl-[protein] + ADP + H(+). With respect to regulation, activated by multiple phosphorylations on threonine and serine residues. In terms of biological role, serine/threonine kinase that may play a role in mediating the growth-factor and stress induced activation of the transcription factor CREB. The polypeptide is Ribosomal protein S6 kinase alpha-6 (rps6ka6) (Danio rerio (Zebrafish)).